A 340-amino-acid polypeptide reads, in one-letter code: tRNA N6-adenosine threonylcarbamoyltransferase (340 aa).

The Fe cation site is built by His-111 and His-115. Residues 134–138, Asp-167, Gly-180, and Asn-276 contribute to the substrate site; that span reads LVSGG. Asp-304 provides a ligand contact to Fe cation.

It belongs to the KAE1 / TsaD family. Fe(2+) is required as a cofactor.

Its subcellular location is the cytoplasm. The catalysed reaction is L-threonylcarbamoyladenylate + adenosine(37) in tRNA = N(6)-L-threonylcarbamoyladenosine(37) in tRNA + AMP + H(+). Required for the formation of a threonylcarbamoyl group on adenosine at position 37 (t(6)A37) in tRNAs that read codons beginning with adenine. Is involved in the transfer of the threonylcarbamoyl moiety of threonylcarbamoyl-AMP (TC-AMP) to the N6 group of A37, together with TsaE and TsaB. TsaD likely plays a direct catalytic role in this reaction. The polypeptide is tRNA N6-adenosine threonylcarbamoyltransferase (Helicobacter pylori (strain Shi470)).